The primary structure comprises 759 residues: uncharacterized protein (759 aa).

2 disordered regions span residues 1–31 (MDGN…TSFQ) and 188–211 (NDEG…PFAN). Positions 17–31 (LSPLQTSFPSSTSFQ) are enriched in low complexity. Positions 189–207 (DEGEDVKDNEQDDNIDESD) are enriched in acidic residues. 10 consecutive transmembrane segments (helical) span residues 434 to 454 (YFRT…ILPM), 456 to 476 (FQGG…VGIL), 486 to 505 (MYNS…LSRA), 517 to 537 (FCFS…YIVL), 555 to 575 (MFYA…GAAL), 597 to 617 (DKWK…VNQA), 620 to 640 (SQWP…YFTA), 643 to 663 (FGSN…LGNI), 670 to 690 (GVAF…GLAA), and 726 to 746 (LVMV…ALVV).

The protein belongs to the ThrE exporter (TC 2.A.79) family.

Its subcellular location is the endoplasmic reticulum membrane. This is an uncharacterized protein from Schizosaccharomyces pombe (strain 972 / ATCC 24843) (Fission yeast).